A 496-amino-acid polypeptide reads, in one-letter code: Nitric oxide synthase, inducible (496 aa).

Residues cysteine 6, glutamate 32, and glutamine 36 each contribute to the FMN site. The region spanning 101–341 (KNLFTMRLRS…VRSVSGFQLP (241 aa)) is the FAD-binding FR-type domain. Residue arginine 121 participates in NADP(+) binding. 6 residues coordinate FAD: histidine 143, arginine 277, tyrosine 279, serine 280, threonine 295, and alanine 297. Residue threonine 300 participates in NADP(+) binding. The FAD site is built by tyrosine 301, valine 314, cysteine 315, and serine 316. Residues threonine 355, arginine 388, serine 417, arginine 418, lysine 424, tyrosine 426, glutamine 428, and aspartate 461 each contribute to the NADP(+) site.

This sequence belongs to the NOS family. In terms of assembly, homodimer. Interacts with NHERF1. Interacts with GAPDH; induced by oxidatively-modified low-densitity lipoprotein (LDL(ox)). Interacts with S100A8 and S100A9 to form the iNOS-S100A8/9 transnitrosylase complex. Interacts with SPSB1, SPSB2 and SPSB4. Interacts with ELOC and CUL5 in the presence of SPSB1 or SPSB2 or SPSB4. Forms a complex with ASL, ASS1 and HSP90AA1; the complex regulates cell-autonomous L-arginine synthesis and citrulline recycling while channeling extracellular L-arginine to nitric oxide synthesis pathway. It depends on heme b as a cofactor. FAD serves as cofactor. FMN is required as a cofactor. The cofactor is (6R)-L-erythro-5,6,7,8-tetrahydrobiopterin. In terms of processing, polyubiquitinated; mediated by SPSB1, SPSB2 and SPSB4, leading to proteasomal degradation.

The protein localises to the cytoplasm. It localises to the cytosol. It catalyses the reaction 2 L-arginine + 3 NADPH + 4 O2 + H(+) = 2 L-citrulline + 2 nitric oxide + 3 NADP(+) + 4 H2O. Its activity is regulated as follows. Not stimulated by calcium/calmodulin. In terms of biological role, produces nitric oxide (NO) which is a messenger molecule with diverse functions throughout the body. In macrophages, NO mediates tumoricidal and bactericidal actions. Also has nitrosylase activity and mediates cysteine S-nitrosylation of cytoplasmic target proteins such PTGS2/COX2. As component of the iNOS-S100A8/9 transnitrosylase complex involved in the selective inflammatory stimulus-dependent S-nitrosylation of GAPDH implicated in regulation of the GAIT complex activity and probably multiple targets including ANXA5, EZR, MSN and VIM. Involved in inflammation, enhances the synthesis of pro-inflammatory mediators such as IL6 and IL8. This chain is Nitric oxide synthase, inducible (NOS2), found in Oryctolagus cuniculus (Rabbit).